A 701-amino-acid chain; its full sequence is Sodium/hydrogen exchanger 6 (701 aa).

Helical transmembrane passes span 71–91 (SANL…IWLF) and 103–123 (GLAM…IHVP). N-linked (GlcNAc...) asparagine glycosylation occurs at asparagine 128. 8 helical membrane passes run 176–196 (VTFD…FYAG), 211–231 (ILAY…SIMY), 252–272 (CLLF…AIFH), 278–298 (VELY…AIVL), 324–344 (IGIF…TGVV), 372–392 (TFLL…FCGI), 414–434 (FELL…LTLF), and 436–456 (FQNH…IFLG). A Glycyl lysine isopeptide (Lys-Gly) (interchain with G-Cter in ubiquitin) cross-link involves residue lysine 475. 2 consecutive transmembrane segments (helical) span residues 479–499 (NFQH…ALAI) and 515–535 (LLIV…MLSC).

Belongs to the monovalent cation:proton antiporter 1 (CPA1) transporter (TC 2.A.36) family. In terms of assembly, homodimer. Interacts with RACK1; regulates the distribution of SLC9A6 between endosomes and the plasma membrane. In terms of processing, ubiquitinated (in vitro). Glycosylated. Ubiquitous. High expression in brain, skeletal muscle, and heart, but is also detected at lower levels in most other tissues.

It is found in the endosome membrane. The protein resides in the recycling endosome membrane. The protein localises to the early endosome membrane. Its subcellular location is the late endosome membrane. It localises to the cell membrane. It carries out the reaction Na(+)(in) + H(+)(out) = Na(+)(out) + H(+)(in). It catalyses the reaction K(+)(in) + H(+)(out) = K(+)(out) + H(+)(in). Its function is as follows. Endosomal Na(+), K(+)/H(+) antiporter. Mediates the electroneutral exchange of endosomal luminal H(+) for a cytosolic Na(+) or K(+). By facilitating proton efflux, SLC9A6 counteracts the acidity generated by vacuolar (V)-ATPase, thereby limiting luminal acidification. Responsible for alkalizing and maintaining the endosomal pH, and consequently in, e.g., endosome maturation and trafficking of recycling endosomal cargo. Plays a critical role during neurodevelopment by regulating synaptic development and plasticity. Implicated in the maintenance of cell polarity in a manner that is dependent on its ability to modulate intravesicular pH. Regulates intracelular pH in some specialized cells, osteoclasts and stereocilia where this transporter localizes to the plasma membrane. The sequence is that of Sodium/hydrogen exchanger 6 from Homo sapiens (Human).